A 99-amino-acid chain; its full sequence is Large ribosomal subunit protein uL23 (99 aa).

This sequence belongs to the universal ribosomal protein uL23 family. In terms of assembly, part of the 50S ribosomal subunit. Contacts protein L29, and trigger factor when it is bound to the ribosome.

Its function is as follows. One of the early assembly proteins it binds 23S rRNA. One of the proteins that surrounds the polypeptide exit tunnel on the outside of the ribosome. Forms the main docking site for trigger factor binding to the ribosome. The sequence is that of Large ribosomal subunit protein uL23 from Hyphomonas neptunium (strain ATCC 15444).